The following is a 477-amino-acid chain: Dihydrolipoyl dehydrogenase (477 aa).

FAD is bound by residues E34–C49, K58, and G122. A disulfide bridge links C49 with C54. NAD(+) is bound by residues G188–I192, E211, V245, and A276–R279. FAD-binding residues include D319 and A327. Residue H451 is the Proton acceptor of the active site.

The protein belongs to the class-I pyridine nucleotide-disulfide oxidoreductase family. Homodimer. The cofactor is FAD.

It localises to the cytoplasm. The enzyme catalyses N(6)-[(R)-dihydrolipoyl]-L-lysyl-[protein] + NAD(+) = N(6)-[(R)-lipoyl]-L-lysyl-[protein] + NADH + H(+). Its function is as follows. The pyruvate dehydrogenase complex catalyzes the overall conversion of pyruvate to acetyl-CoA and CO(2). It contains multiple copies of three enzymatic components: pyruvate dehydrogenase (E1), dihydrolipoamide acetyltransferase (E2) and lipoamide dehydrogenase (E3). The protein is Dihydrolipoyl dehydrogenase of Azotobacter vinelandii.